Reading from the N-terminus, the 376-residue chain is MSEGLYEKFLAPDEPFPLLSQRGSASEEGCLDVSDFGCQLSSCHRTDPLHRFHSNRWNLTSCGTSVASSECSEELFSSVSVGDQDDCYSLLDDQDFTSFDLFPEGSVCSDVSSSISTYWDWSDSEFEWQLPGSDIASGSDVLSDIIPSIPSSPCLPSRKKNKHRNLDELPWSAMTNDEQVEYIEYLSRKVSTEMGLREQLDIIKIIDPTAQISPTDSEFIIELNCLTDEKLKQVRSYIKEHSPRQRSTRESWKRTSYSTASTSGVSGASVSSSSASMVSTASSTGSSGGNSASNSSANMSRTHSDSNLSASAAERIRDSKKRSKQRKLQQKALRKRQLKEQRQARKERLSGLFLNEEVLSVKVNEEDHEGDVDVLM.

Positions Tyr237–Lys253 are enriched in basic and acidic residues. The disordered stretch occupies residues Tyr237–Ser350. Positions Thr255–Ser300 are enriched in low complexity. The segment covering Asp318–Gln337 has biased composition (basic residues). The stretch at Lys320–Leu349 forms a coiled coil. Over residues Leu338–Leu349 the composition is skewed to basic and acidic residues.

It belongs to the FAM199 family.

This Xenopus tropicalis (Western clawed frog) protein is Protein FAM199X (fam199x).